The primary structure comprises 545 residues: DnaJ homolog subfamily C member 21 (545 aa).

One can recognise a J domain in the interval 3–69 (CHYEVLGVKR…QERAWYDNHR (67 aa)). Disordered regions lie at residues 122–141 (EKEHSKDEEDEEDEFPSFGE), 276–302 (EYGQEFGDASDSEENEEELESRDIANV), 331–497 (SFKS…KEVN), and 522–545 (HATALSSSNTSQTSKKKKDSRKNR). Composition is skewed to acidic residues over residues 129–141 (EEDEEDEFPSFGE) and 283–295 (DASDSEENEEELE). Residues 180–286 (RWEKRAMEKE…YGQEFGDASD (107 aa)) are a coiled coil. Residues 323-347 (LYCPACDKSFKSDKAMKNHSKSKKH) form a C2H2-type 1 zinc finger. Residues 339–348 (KNHSKSKKHR) show a composition bias toward basic residues. Over residues 372–388 (REEDDEEEDDDDDDEQN) the composition is skewed to acidic residues. The segment covering 394–406 (KLSKRQKKKKRLQ) has biased composition (basic residues). Residues 498–522 (LRCVTCQYEFTTRNKLFDHLKSTGH) form a C2H2-type 2 zinc finger. Residues 535–545 (SKKKKDSRKNR) are compositionally biased toward basic residues.

In terms of biological role, may act as a co-chaperone for HSP70. The protein is DnaJ homolog subfamily C member 21 (dnajc21) of Danio rerio (Zebrafish).